Here is a 378-residue protein sequence, read N- to C-terminus: Histidinol-phosphate aminotransferase 2 (378 aa).

N6-(pyridoxal phosphate)lysine is present on Lys-240.

Belongs to the class-II pyridoxal-phosphate-dependent aminotransferase family. Histidinol-phosphate aminotransferase subfamily. Homodimer. Pyridoxal 5'-phosphate serves as cofactor.

The enzyme catalyses L-histidinol phosphate + 2-oxoglutarate = 3-(imidazol-4-yl)-2-oxopropyl phosphate + L-glutamate. It participates in amino-acid biosynthesis; L-histidine biosynthesis; L-histidine from 5-phospho-alpha-D-ribose 1-diphosphate: step 7/9. This is Histidinol-phosphate aminotransferase 2 (hisC2) from Caulobacter vibrioides (strain ATCC 19089 / CIP 103742 / CB 15) (Caulobacter crescentus).